Reading from the N-terminus, the 524-residue chain is Na(+)/H(+) antiporter NhaB (524 aa).

A run of 13 helical transmembrane segments spans residues Leu-23–Val-43, Gly-45–Leu-65, Leu-98–Phe-118, Cys-136–Ile-156, Leu-203–Pro-223, Phe-239–Ile-259, Ala-304–Val-324, Gly-325–Gly-345, Leu-358–Ile-378, Leu-392–Val-412, Ala-420–Thr-440, Ala-448–Ile-468, and Ala-479–Val-499.

Belongs to the NhaB Na(+)/H(+) (TC 2.A.34) antiporter family.

The protein localises to the cell inner membrane. It carries out the reaction 2 Na(+)(in) + 3 H(+)(out) = 2 Na(+)(out) + 3 H(+)(in). Na(+)/H(+) antiporter that extrudes sodium in exchange for external protons. In Yersinia enterocolitica serotype O:8 / biotype 1B (strain NCTC 13174 / 8081), this protein is Na(+)/H(+) antiporter NhaB.